The chain runs to 210 residues: Neurotrophin-4 (210 aa).

The N-terminal stretch at 1–24 (MLPLPSCSLPILLLFLLPSVPIES) is a signal peptide. Positions 25-80 (QPPPSTLPPFLAPEWDLLSPRVVLSRGAPAGPPLLFLLEAGAFRESAGAPANRSRR) are excised as a propeptide. N-linked (GlcNAc...) asparagine glycosylation is present at N76. 3 disulfides stabilise this stretch: C97/C170, C141/C199, and C158/C201.

This sequence belongs to the NGF-beta family. As to expression, highest levels in prostate, lower levels in thymus, placenta, and skeletal muscle. Expressed in embryonic and adult tissues.

The protein resides in the secreted. In terms of biological role, target-derived survival factor for peripheral sensory sympathetic neurons. May promote ameloblast differentiation and subsequent reduction in proliferation of ameloblasts. This Homo sapiens (Human) protein is Neurotrophin-4 (NTF4).